The chain runs to 71 residues: UPF0434 protein APH_0052 (71 aa).

The span at 52 to 63 (RKLQPEEPKEGS) shows a compositional bias: basic and acidic residues. Residues 52–71 (RKLQPEEPKEGSELQSSDNQ) form a disordered region.

The protein belongs to the UPF0434 family.

This Anaplasma phagocytophilum (strain HZ) protein is UPF0434 protein APH_0052.